Consider the following 140-residue polypeptide: Ig heavy chain V region 93G7 (140 aa).

An N-terminal signal peptide occupies residues 1–19 (MGWSFIFLFLLSVTAGVHS). Residues 20-139 (EVQLQQSGAE…WGQGTPLTVS (120 aa)) form the Ig-like domain.

The chain is Ig heavy chain V region 93G7 from Mus musculus (Mouse).